The following is a 185-amino-acid chain: Crossover junction endodeoxyribonuclease RuvC (185 aa).

Catalysis depends on residues Asp7, Glu68, and Asp141. Residues Asp7, Glu68, and Asp141 each coordinate Mg(2+).

Belongs to the RuvC family. In terms of assembly, homodimer which binds Holliday junction (HJ) DNA. The HJ becomes 2-fold symmetrical on binding to RuvC with unstacked arms; it has a different conformation from HJ DNA in complex with RuvA. In the full resolvosome a probable DNA-RuvA(4)-RuvB(12)-RuvC(2) complex forms which resolves the HJ. It depends on Mg(2+) as a cofactor.

Its subcellular location is the cytoplasm. It catalyses the reaction Endonucleolytic cleavage at a junction such as a reciprocal single-stranded crossover between two homologous DNA duplexes (Holliday junction).. Its function is as follows. The RuvA-RuvB-RuvC complex processes Holliday junction (HJ) DNA during genetic recombination and DNA repair. Endonuclease that resolves HJ intermediates. Cleaves cruciform DNA by making single-stranded nicks across the HJ at symmetrical positions within the homologous arms, yielding a 5'-phosphate and a 3'-hydroxyl group; requires a central core of homology in the junction. The consensus cleavage sequence is 5'-(A/T)TT(C/G)-3'. Cleavage occurs on the 3'-side of the TT dinucleotide at the point of strand exchange. HJ branch migration catalyzed by RuvA-RuvB allows RuvC to scan DNA until it finds its consensus sequence, where it cleaves and resolves the cruciform DNA. The polypeptide is Crossover junction endodeoxyribonuclease RuvC (Mycobacterium sp. (strain MCS)).